Here is a 1213-residue protein sequence, read N- to C-terminus: Protein jagged-1b (1213 aa).

The N-terminal stretch at 1–26 is a signal peptide; it reads MILRRSSVFSAFYLHAFLLCLRTTVS. Residues 27 to 1064 lie on the Extracellular side of the membrane; sequence DASGHFELEI…HQIPSPKTDY (1038 aa). The N-linked (GlcNAc...) asparagine glycan is linked to asparagine 139. The 45-residue stretch at 182–226 folds into the DSL domain; it reads VTCLEHYYGFGCNKFCRPRDEFFGHYTCDQNGNKTCLEGWTGPDC. Intrachain disulfides connect cysteine 184–cysteine 193 and cysteine 197–cysteine 209. The N-linked (GlcNAc...) asparagine glycan is linked to asparagine 214. 39 disulfides stabilise this stretch: cysteine 217-cysteine 226, cysteine 231-cysteine 242, cysteine 235-cysteine 248, cysteine 250-cysteine 259, cysteine 262-cysteine 273, cysteine 268-cysteine 279, cysteine 281-cysteine 290, cysteine 297-cysteine 309, cysteine 303-cysteine 319, cysteine 321-cysteine 330, cysteine 337-cysteine 348, cysteine 342-cysteine 357, cysteine 359-cysteine 368, cysteine 375-cysteine 386, cysteine 380-cysteine 395, cysteine 397-cysteine 406, cysteine 413-cysteine 424, cysteine 418-cysteine 433, cysteine 435-cysteine 444, cysteine 451-cysteine 461, cysteine 455-cysteine 470, cysteine 472-cysteine 481, cysteine 488-cysteine 499, cysteine 493-cysteine 508, cysteine 510-cysteine 519, cysteine 526-cysteine 537, cysteine 531-cysteine 546, cysteine 548-cysteine 557, cysteine 596-cysteine 612, cysteine 614-cysteine 623, cysteine 630-cysteine 641, cysteine 635-cysteine 650, cysteine 652-cysteine 661, cysteine 668-cysteine 679, cysteine 673-cysteine 688, cysteine 690-cysteine 699, cysteine 706-cysteine 717, cysteine 711-cysteine 726, and cysteine 728-cysteine 737. In terms of domain architecture, EGF-like 1 spans 227 to 260; that stretch reads NTAICRQGCSTEHGSCKQPGGCKCLYGWQGPYCD. Positions 261–291 constitute an EGF-like 2; atypical domain; it reads KCIPHPGCVHGTCVEPWQCLCDTNWGGQLCD. 2 consecutive EGF-like domains span residues 293–331 and 333–369; these read DLNYCGTHQPCLNGGTCSNTGPDKYQCSCEDGYSGVNCE and AEHACLSNPCANGGTCKETSQGYECHCAIGWSGTSCE. In terms of domain architecture, EGF-like 5; calcium-binding spans 371-407; the sequence is NVDDCTPNQCKHGGTCQDLVNGFKCACPPHWTGKTCQ. The EGF-like 6; calcium-binding domain maps to 409–445; sequence DANECEDKPCVNAKSCHNLIGAYFCECLPGWSGQNCD. In terms of domain architecture, EGF-like 7; calcium-binding spans 447-482; the sequence is NINDCKGQCLNGGTCKDLVNGYRCLCPPGYTGEQCE. In terms of domain architecture, EGF-like 8; calcium-binding spans 484–520; sequence DVDECASSPCLNGGRCQDEVNGFQCLCPAGFSGQLCQ. EGF-like domains lie at 522 to 558 and 592 to 624; these read DIDYCKPNPCQNGAQCFNLASDYFCKCPDDYEGKNCS and SSNVCGPHGRCRSQAGGQFTCECQEGFRGTYCH. N-linked (GlcNAc...) asparagine glycosylation occurs at asparagine 556. An EGF-like 11; calcium-binding domain is found at 626–662; that stretch reads NINDCESNPCRNGGTCIDKVNVYQCICADGWEGVHCE. The 37-residue stretch at 664-700 folds into the EGF-like 12; calcium-binding domain; sequence NIDDCSLNPCLNKGACQDLVNDFYCECRNGWKGKTCH. An EGF-like 13 domain is found at 702 to 738; that stretch reads RDSQCDEATCNNGGTCHDEGDTFKCRCSPGWEGATCN. N-linked (GlcNAc...) asparagine glycosylation occurs at asparagine 742. 9 disulfides stabilise this stretch: cysteine 745–cysteine 756, cysteine 750–cysteine 765, cysteine 767–cysteine 776, cysteine 783–cysteine 794, cysteine 788–cysteine 803, cysteine 805–cysteine 814, cysteine 821–cysteine 832, cysteine 826–cysteine 841, and cysteine 843–cysteine 852. Residues 746–777 enclose the EGF-like 14 domain; that stretch reads LPNPCENGGTCVVNGDSFNCVCKEGWEGSTCT. The EGF-like 15; calcium-binding domain maps to 779–815; that stretch reads NTNDCNPHPCYNSGTCVDGENWYRCECAPGFAGPDCR. In terms of domain architecture, EGF-like 16; calcium-binding spans 817 to 853; sequence NINECQSSPCAFGSTCVDEINGYRCLCPPGRIGPDCQ. In terms of domain architecture, VWFC spans 860-914; it reads CIANGQVTADGAKWEEDCNICQCQNGRIHCTMMWCGPKSCRIGKARGGCPASQSC. Positions 918–956 constitute an EGF-like 17 domain; that stretch reads KEEQCFVKPCPSLGECWPSAPPPPSKCHASFSYQDDSCA. Asparagine 957, asparagine 988, and asparagine 1042 each carry an N-linked (GlcNAc...) asparagine glycan. The helical transmembrane segment at 1065-1087 threads the bilayer; it reads LVPLLSSIFIVLWIFALASAFLW. Residues 1088–1213 lie on the Cytoplasmic side of the membrane; sequence CIHRRRKQNT…QSLNRMEYIV (126 aa). The interval 1181–1202 is disordered; the sequence is EERAPNKNPNWTNKQDNRDLET.

The protein resides in the membrane. The protein localises to the cell membrane. Its function is as follows. Ligand for Notch receptors and involved in the mediation of Notch signaling. Seems to be involved in cell-fate decisions. This chain is Protein jagged-1b (jag1b), found in Danio rerio (Zebrafish).